The chain runs to 335 residues: Capsular polysaccharide phosphotransferase WcwK (335 aa).

This sequence belongs to the stealth family.

This Streptococcus pneumoniae protein is Capsular polysaccharide phosphotransferase WcwK (wcwK).